A 546-amino-acid polypeptide reads, in one-letter code: Intermembrane transport protein PqiB (546 aa).

The Cytoplasmic segment spans residues 1–15 (MESNNGEAKIQKVKN). A helical transmembrane segment spans residues 16 to 36 (WSPVWIFPIVTALIGAWVLFY). The Periplasmic segment spans residues 37–546 (HYSHQGPEVT…KDPEPKRAKQ (510 aa)). MCE/MlaD stretches follow at residues 42 to 133 (GPEV…LQPG), 158 to 217 (IRVI…NNVR), and 285 to 389 (HIDY…LDFY). A coiled-coil region spans residues 437 to 464 (IEQATSTLSESQRTMKNLQTTLDSMNKI).

This sequence belongs to the PqiB family. In terms of assembly, homohexamer. May form a complex composed of PqiA, PqiB and PqiC. Interacts with PqiC.

The protein resides in the cell inner membrane. Forms a tunnel that spans the entire periplasmic space. Could be implicated in lipid transport between the inner membrane and the outer membrane. Binds phospholipids. Required for outer membrane homeostasis. Contributes to membrane integrity. The sequence is that of Intermembrane transport protein PqiB from Escherichia coli (strain K12).